Consider the following 618-residue polypeptide: Manganese lipoxygenase (618 aa).

Residues 1–16 form the signal peptide; that stretch reads MRSRILAIVFAARHVA. Over residues 36 to 45 the composition is skewed to low complexity; sequence SSTTVLPSPT. The disordered stretch occupies residues 36-58; sequence SSTTVLPSPTQYTLPNNDPNQGA. Over residues 46–58 the composition is skewed to polar residues; that stretch reads QYTLPNNDPNQGA. In terms of domain architecture, Lipoxygenase spans 47-617; the sequence is YTLPNNDPNQ…NPAVNPFFLS (571 aa). 5 N-linked (GlcNAc...) asparagine glycosylation sites follow: asparagine 60, asparagine 91, asparagine 106, asparagine 116, and asparagine 157. 4 residues coordinate Mn(2+): histidine 290, histidine 294, histidine 478, and asparagine 482. Asparagine 513 is a glycosylation site (N-linked (GlcNAc...) asparagine). Residue valine 618 participates in Mn(2+) binding.

It belongs to the lipoxygenase family. It depends on Mn(2+) as a cofactor. In terms of processing, N- and O-glycosylated.

The protein localises to the secreted. The catalysed reaction is (9Z,12Z)-octadecadienoate + O2 = (11S)-hydroperoxy-(9Z,12Z)-octadecadienoate. It catalyses the reaction (9Z,12Z)-octadecadienoate + O2 = (13R)-hydroperoxy-(9Z,11E)-octadecadienoate. It carries out the reaction (9Z,12Z,15Z)-octadecatrienoate + O2 = (11S)-hydroperoxy-(9Z,12Z,15Z)-octadecatrienoate. The enzyme catalyses (9Z,12Z,15Z)-octadecatrienoate + O2 = (13R)-hydroperoxy-(9Z,11E,15Z)-octadecatrienoate. Its function is as follows. Lipoxygenase that metabolizes linoleic and alpha-linolenic acids to 11S- and 13R-hydroperoxy fatty acids. At the end of lipoxygenation, the intermediate product 11S-HPODE from linoleic acid is then transformed into 13R-HPODE as the final product. It also acts on alpha-linolenic acid producing 11S-HPOTrE and 13R-HPOTrE with subsequent transformation of 11S-HPOTrE to 13R-HPOTrE as the final product. Gamma-linolenic acid is a poor substrate. Oleate and arachidonate are not substrates. This Gaeumannomyces tritici (Wheat and barley take-all root rot fungus) protein is Manganese lipoxygenase.